We begin with the raw amino-acid sequence, 348 residues long: MKENGDSVSGQDELCDLTIIGGGPTGIFAAFQCGMNNISCRIIESMPELGGQLTALYPEKHIYDVAAFPEVQASELVESLWGQAKRYDPEVVLDEQVRQYKKLDDGSFEVETLSGRTFASRALLVAAGLGAFSPRKLPQLGDISELEGHTVLYSVQNMKELEGKKVLIVGGGDSALDWAMMLLPHAEHITVAHRSPDFRAHGKTKDDLFAAAEKGLVDVHLNTEVIAIDHDGPALRHAYLRSKSGKETSLEAEYMLVLIGFKSDLGPLAEWGLELCENAMVVDSQMKTEVDGLYAAGDIAYYPGKLKIIQTGLSDATMAVRHCLNYIHPGEKIKQQFSSIKMAKEKNK.

FAD-binding residues include threonine 25, glutamate 44, glutamine 52, tyrosine 57, valine 97, phenylalanine 132, aspartate 298, and serine 339.

Belongs to the ferredoxin--NADP reductase type 2 family. In terms of assembly, homodimer. Requires FAD as cofactor.

The enzyme catalyses 2 reduced [2Fe-2S]-[ferredoxin] + NADP(+) + H(+) = 2 oxidized [2Fe-2S]-[ferredoxin] + NADPH. This is Ferredoxin--NADP reductase from Chlorobium phaeobacteroides (strain BS1).